The primary structure comprises 350 residues: Cyclin-O (350 aa).

A disordered region spans residues 1–89 (MVTPCPTSPS…GSPLPGPAQP (89 aa)). Residues 28–42 (PVKKSRRPRLRRKQP) are compositionally biased toward basic residues. Position 81 is a phosphoserine (Ser-81).

It belongs to the cyclin family. As to expression, present in respiratory cells (at protein level).

The protein localises to the cytoplasm. Its subcellular location is the nucleus. The protein resides in the nucleolus. Functionally, specifically required for generation of multiciliated cells, possibly by promoting a cell cycle state compatible with centriole amplification and maturation. Acts downstream of MCIDAS to promote mother centriole amplification and maturation in preparation for apical docking. This Homo sapiens (Human) protein is Cyclin-O.